A 556-amino-acid chain; its full sequence is MKSDIEIAQSVALQPITDIVKKVGIDGDDIELYGKYKAKLSFEKMKAVEANEPGKLLLVTAINPTPAGEGKSTMSIGLADALNQMGKKTMLALREPSLGPVMGIKGGAAGGGYAQVLPMEDINLHFTGDMHAITTANNALSALIDNHLQQGNDLGIDPRRIIWKRVLDLNDRALRQVIVGLGSPVNGVPREDGFDITVASEIMAILCLATDLKDLKKRLADIVVAYTYDRKPVYVRDLKVEGALTLILKDAIKPNLVQTIYGTPALIHGGPFANIAHGCNSVLATSTALRLADYTVTEAGFGADLGAEKFLNIKVPNLPKAPDAIVIVATLRALKMHGGVAKSDLAAENCEAVRLGFANLKRHVENMRQFKVPVVVAINEFVADTEAEIATLKALCEEIKVPVELASVWANGAEGGLALAKTVVRVIDQEAADYKRLYSDEDTLEEKVINIVTQIYGGKAVQFGPKAKTQLKQFTEFGWDKLPVCMAKTQYSFSDNPSLLGAPTDFDITIREFVPKTGAGFIVGLTGDVMTMPGLPKVPAAMAMDVAENGTALGLF.

65–72 contacts ATP; that stretch reads TPAGEGKS.

The protein belongs to the formate--tetrahydrofolate ligase family.

It catalyses the reaction (6S)-5,6,7,8-tetrahydrofolate + formate + ATP = (6R)-10-formyltetrahydrofolate + ADP + phosphate. Its pathway is one-carbon metabolism; tetrahydrofolate interconversion. The chain is Formate--tetrahydrofolate ligase 1 from Streptococcus pyogenes serotype M28 (strain MGAS6180).